A 491-amino-acid chain; its full sequence is MPVDLNFTIAAPLLALAAGALLILLLDLLFRYETIQGPMYVAAVGAVLVAGWYLVPLWRGAAEPFGFHGMLVMDRFAAVYGLVLLGAALLAILLSFGRVREDQSGYLALLLWAAMGMVLLGGAGNLMVIFLGIELLSLALYVMIAFAPKRMAAREAAFKYFVLGSVAAAFLIFGFALIYGAAGTMSLTGIAAAARSFTSEGAWSVGLYYKVGVGLAIVGLAFKMALVPFHIWAPDVYQGAPTPVTAFMAIGTKAAAFAAMARLLVAAVPQAYQPSFLLPLSILAFASMMLGATVGIWQSDLKRLMAYSGIANAGYLIMAIPGLGLDGLSAAAYYLAAYGFATMGVFAVVRILEADGVDGSQLANLKGLFYRSPWVGVCLAVLFFGLIGVPPTGGFVGKFLLAIAAVRGGAWIVLTGLILSTGISAYVYLKVIGTAFTRTKVAPQPEEGEEPHPPTRTAAQVVLAIATAGTLVLGVLPGPVSELLRVALAGM.

14 helical membrane-spanning segments follow: residues 9-29 (IAAP…LDLL), 38-58 (PMYV…VPLW), 76-96 (FAAV…LLSF), 104-124 (SGYL…GGAG), 126-146 (LMVI…MIAF), 161-181 (FVLG…IYGA), 211-231 (VGVG…PFHI), 246-266 (AFMA…LLVA), 276-296 (FLLP…TVGI), 304-324 (LMAY…PGLG), 329-349 (SAAA…FAVV), 375-395 (VGVC…TGGF), 410-432 (AWIV…LKVI), and 461-481 (VVLA…GPVS).

The protein belongs to the complex I subunit 2 family. As to quaternary structure, NDH-1 is composed of 14 different subunits. Subunits NuoA, H, J, K, L, M, N constitute the membrane sector of the complex.

The protein localises to the cell membrane. The catalysed reaction is a quinone + NADH + 5 H(+)(in) = a quinol + NAD(+) + 4 H(+)(out). Its function is as follows. NDH-1 shuttles electrons from NADH, via FMN and iron-sulfur (Fe-S) centers, to quinones in the respiratory chain. The immediate electron acceptor for the enzyme in this species is believed to be a menaquinone. Couples the redox reaction to proton translocation (for every two electrons transferred, four hydrogen ions are translocated across the cytoplasmic membrane), and thus conserves the redox energy in a proton gradient. In Symbiobacterium thermophilum (strain DSM 24528 / JCM 14929 / IAM 14863 / T), this protein is NADH-quinone oxidoreductase subunit N 1.